The sequence spans 306 residues: Ribonuclease Z (306 aa).

Residues histidine 63, histidine 65, aspartate 67, histidine 68, histidine 141, aspartate 211, and histidine 269 each contribute to the Zn(2+) site. The Proton acceptor role is filled by aspartate 67.

This sequence belongs to the RNase Z family. Homodimer. Zn(2+) is required as a cofactor.

It catalyses the reaction Endonucleolytic cleavage of RNA, removing extra 3' nucleotides from tRNA precursor, generating 3' termini of tRNAs. A 3'-hydroxy group is left at the tRNA terminus and a 5'-phosphoryl group is left at the trailer molecule.. Functionally, zinc phosphodiesterase, which displays some tRNA 3'-processing endonuclease activity. Probably involved in tRNA maturation, by removing a 3'-trailer from precursor tRNA. The polypeptide is Ribonuclease Z (Staphylococcus saprophyticus subsp. saprophyticus (strain ATCC 15305 / DSM 20229 / NCIMB 8711 / NCTC 7292 / S-41)).